The chain runs to 102 residues: Integration host factor subunit beta (102 aa).

It belongs to the bacterial histone-like protein family. Heterodimer of an alpha and a beta chain.

Functionally, this protein is one of the two subunits of integration host factor, a specific DNA-binding protein that functions in genetic recombination as well as in transcriptional and translational control. This is Integration host factor subunit beta from Rhizobium rhizogenes (strain K84 / ATCC BAA-868) (Agrobacterium radiobacter).